Reading from the N-terminus, the 616-residue chain is Homeodomain-interacting protein kinase 4 (616 aa).

Positions 11-347 (YDIIEVLGKG…PSAALRHPFV (337 aa)) constitute a Protein kinase domain. ATP contacts are provided by residues 17–25 (LGKGTFGEV) and Lys40. Residue Asp136 is the Proton acceptor of the active site. Residues 487–616 (HKARKAPAGS…SFLQHVGGHH (130 aa)) form a disordered region. Polar residues predominate over residues 497 to 512 (KSDSNFSNLIRLSQAS). Ser512 is subject to Phosphoserine. Residues 542–560 (REGDGPGIKDRPMDAERPG) are compositionally biased toward basic and acidic residues.

It belongs to the protein kinase superfamily. CMGC Ser/Thr protein kinase family. HIPK subfamily. Post-translationally, autophosphorylated. Expressed at moderate levels in lung and white adipose tissues and weakly in brain and liver.

Its subcellular location is the cytoplasm. It catalyses the reaction L-seryl-[protein] + ATP = O-phospho-L-seryl-[protein] + ADP + H(+). The enzyme catalyses L-threonyl-[protein] + ATP = O-phospho-L-threonyl-[protein] + ADP + H(+). In terms of biological role, protein kinase that phosphorylates murine TP53 at Ser-9, and thus induces TP53 repression of BIRC5 promoter. May act as a corepressor of transcription factors (Potential). This Mus musculus (Mouse) protein is Homeodomain-interacting protein kinase 4 (Hipk4).